The chain runs to 262 residues: Thiazole synthase (262 aa).

The active-site Schiff-base intermediate with DXP is Lys104. Residues Gly165, 191–192, and 213–214 contribute to the 1-deoxy-D-xylulose 5-phosphate site; these read AG and NT.

Belongs to the ThiG family. In terms of assembly, homotetramer. Forms heterodimers with either ThiH or ThiS.

Its subcellular location is the cytoplasm. It catalyses the reaction [ThiS sulfur-carrier protein]-C-terminal-Gly-aminoethanethioate + 2-iminoacetate + 1-deoxy-D-xylulose 5-phosphate = [ThiS sulfur-carrier protein]-C-terminal Gly-Gly + 2-[(2R,5Z)-2-carboxy-4-methylthiazol-5(2H)-ylidene]ethyl phosphate + 2 H2O + H(+). It functions in the pathway cofactor biosynthesis; thiamine diphosphate biosynthesis. Functionally, catalyzes the rearrangement of 1-deoxy-D-xylulose 5-phosphate (DXP) to produce the thiazole phosphate moiety of thiamine. Sulfur is provided by the thiocarboxylate moiety of the carrier protein ThiS. In vitro, sulfur can be provided by H(2)S. This is Thiazole synthase from Alkalilimnicola ehrlichii (strain ATCC BAA-1101 / DSM 17681 / MLHE-1).